The sequence spans 663 residues: Probable peptidyl-glycine alpha-amidating monooxygenase pamn-1 (663 aa).

The N-terminal stretch at Met1–Ala21 is a signal peptide. The peptidylglycine alpha-hydroxylating monooxygenase stretch occupies residues Met1–Pro300. Positions 75 and 76 each coordinate Cu(2+). Residues Cys82 and Cys98 are joined by a disulfide bond. His142 is a binding site for Cu(2+). Residue Asn191 is glycosylated (N-linked (GlcNAc...) asparagine). 2 disulfides stabilise this stretch: Cys194–Cys305 and Cys261–Cys283. Cu(2+) contacts are provided by His210 and His212. A glycan (N-linked (GlcNAc...) asparagine) is linked at Asn269. Met282 contacts Cu(2+). Residues Gln301–Asn663 form a peptidyl-alpha-hydroxyglycine alpha-amidating lyase region. Arg376 is an a protein binding site. An N-linked (GlcNAc...) asparagine glycan is attached at Asn411. 4 NHL repeats span residues Asn411–Glu454, Ser464–Asn507, Ile511–Gln554, and Phe626–Phe656. An intrachain disulfide couples Cys478 to Cys497. A protein contacts are provided by Tyr496 and Arg543.

It in the C-terminal section; belongs to the peptidyl-alpha-hydroxyglycine alpha-amidating lyase family. This sequence in the N-terminal section; belongs to the copper type II ascorbate-dependent monooxygenase family. Monomer. The cofactor is Zn(2+). Requires Cu(2+) as cofactor.

It is found in the secreted. It catalyses the reaction a [peptide]-C-terminal glycine + 2 L-ascorbate + O2 = a [peptide]-C-terminal (2S)-2-hydroxyglycine + 2 monodehydro-L-ascorbate radical + H2O. It carries out the reaction a [peptide]-C-terminal (2S)-2-hydroxyglycine = a [peptide]-C-terminal amide + glyoxylate. In terms of biological role, probable bifunctional enzyme that catalyzes 2 sequential steps in C-terminal alpha-amidation of peptides. The monooxygenase part produces an unstable peptidyl(2-hydroxyglycine) intermediate that is dismutated to glyoxylate and the corresponding desglycine peptide amide by the lyase part. C-terminal amidation of peptides such as neuropeptides is essential for full biological activity. The chain is Probable peptidyl-glycine alpha-amidating monooxygenase pamn-1 from Caenorhabditis elegans.